Here is a 630-residue protein sequence, read N- to C-terminus: MEINYEKVGLKVGLEIHQQLNTKRKLFCHCPTILRDDEPDGEIVRVLRPSLSEMGEVDRAALIEARKGKKFIYQFYNDTTCLVELDEEPPHPPSEEALRIALEVALLMNMNVVDVAYTMRKIVIDGSNTSGFQRTIFLARDGYIETSEGKVGITSLCLEEDAARKIEDRGDAVVYNLDRLGIPLVEISTAPDIKTPKMAKEAARRIGEILRATGKVKRGLGTIRQDINISIKDGARIEVKGVQDLDLIEKVVENEVIRQLNLLKIRDELRERNAEVVEKIFDVTEIFKDCKSKIIQNALKKKNGKVKAVLLKGFAGLVGKEIQPGRRLGTEFSDRAKVIAGVGGLFHTDELPKYGITEEEVKKLKEFVNAEENDAVIIVADEESKVDRALEAVIERAKEALIGVPEETRRALEDGNTAYLRPLPGAARMYPETDIPPIIIKKEFIEEIRANLPELPEEKFERFKKEYKLNDELAKKMVLSYYVDLFEDLCKKFKNVKPVLIATTLEGTLKEIKREGYDIDKLEDRHLEETFKALSEGKIAKEGIVEVLKGFCEFPDKSIDEILEIKGLKGLSKEEVEKIIEGIIKEHLNVVKEKGEKAYGFLMGRCMAKLRGKADGKLVNDILRKKLKEI.

Belongs to the GatB/GatE family. GatE subfamily. In terms of assembly, heterodimer of GatD and GatE.

The enzyme catalyses L-glutamyl-tRNA(Gln) + L-glutamine + ATP + H2O = L-glutaminyl-tRNA(Gln) + L-glutamate + ADP + phosphate + H(+). Allows the formation of correctly charged Gln-tRNA(Gln) through the transamidation of misacylated Glu-tRNA(Gln) in organisms which lack glutaminyl-tRNA synthetase. The reaction takes place in the presence of glutamine and ATP through an activated gamma-phospho-Glu-tRNA(Gln). The GatDE system is specific for glutamate and does not act on aspartate. This is Glutamyl-tRNA(Gln) amidotransferase subunit E from Methanocaldococcus jannaschii (strain ATCC 43067 / DSM 2661 / JAL-1 / JCM 10045 / NBRC 100440) (Methanococcus jannaschii).